The chain runs to 273 residues: 4-hydroxy-tetrahydrodipicolinate reductase (273 aa).

NAD(+)-binding positions include 12-17 (GAGGRM) and glutamate 38. Arginine 39 contacts NADP(+). NAD(+)-binding positions include 102 to 104 (GTT) and 126 to 129 (AANF). The active-site Proton donor/acceptor is histidine 159. Histidine 160 contributes to the (S)-2,3,4,5-tetrahydrodipicolinate binding site. Lysine 163 acts as the Proton donor in catalysis. A (S)-2,3,4,5-tetrahydrodipicolinate-binding site is contributed by 169–170 (GT).

It belongs to the DapB family. In terms of assembly, homotetramer.

The protein resides in the cytoplasm. It catalyses the reaction (S)-2,3,4,5-tetrahydrodipicolinate + NAD(+) + H2O = (2S,4S)-4-hydroxy-2,3,4,5-tetrahydrodipicolinate + NADH + H(+). It carries out the reaction (S)-2,3,4,5-tetrahydrodipicolinate + NADP(+) + H2O = (2S,4S)-4-hydroxy-2,3,4,5-tetrahydrodipicolinate + NADPH + H(+). The protein operates within amino-acid biosynthesis; L-lysine biosynthesis via DAP pathway; (S)-tetrahydrodipicolinate from L-aspartate: step 4/4. Its function is as follows. Catalyzes the conversion of 4-hydroxy-tetrahydrodipicolinate (HTPA) to tetrahydrodipicolinate. In Pectobacterium carotovorum subsp. carotovorum (strain PC1), this protein is 4-hydroxy-tetrahydrodipicolinate reductase.